Here is a 1145-residue protein sequence, read N- to C-terminus: DNA polymerase II large subunit (1145 aa).

The disordered stretch occupies residues 284-303; that stretch reads KSSSESDEDEETDGKPKIKP.

Belongs to the archaeal DNA polymerase II family. In terms of assembly, heterodimer of a large subunit and a small subunit.

The catalysed reaction is DNA(n) + a 2'-deoxyribonucleoside 5'-triphosphate = DNA(n+1) + diphosphate. It carries out the reaction Exonucleolytic cleavage in the 3'- to 5'-direction to yield nucleoside 5'-phosphates.. In terms of biological role, possesses two activities: a DNA synthesis (polymerase) and an exonucleolytic activity that degrades single-stranded DNA in the 3'- to 5'-direction. Has a template-primer preference which is characteristic of a replicative DNA polymerase. This Methanococcoides burtonii (strain DSM 6242 / NBRC 107633 / OCM 468 / ACE-M) protein is DNA polymerase II large subunit.